The following is a 382-amino-acid chain: V-set and immunoglobulin domain-containing protein 1 (382 aa).

Residues 1–21 (MGLTFWKVFLILNCLAGQVNG) form the signal peptide. An Ig-like V-type domain is found at 22–133 (VQVTIPDSFV…FFGKNQGTIS (112 aa)). Over 22-234 (VQVTIPDSFV…DLTTPYPGIG (213 aa)) the chain is Extracellular. N-linked (GlcNAc...) asparagine glycosylation occurs at Asn-32. Disulfide bonds link Cys-43–Cys-116 and Cys-161–Cys-211. The Ig-like C2-type domain occupies 140–227 (PSKPFCSIQG…GNSSCEIDLT (88 aa)). N-linked (GlcNAc...) asparagine glycans are attached at residues Asn-200 and Asn-219. Residues 235 to 255 (IIVGAFVGTLIGVIIIISVVW) traverse the membrane as a helical segment. Residues 256–382 (FVRRKVKAKG…FCDEEKVIKP (127 aa)) lie on the Cytoplasmic side of the membrane. The segment at 266 to 382 (KERKRNSKTT…FCDEEKVIKP (117 aa)) is disordered. A compositionally biased stretch (polar residues) spans 273–285 (KTTTELEPMTKIN). Residues 286-298 (QRTEGETMPREDA) show a composition bias toward basic and acidic residues. Over residues 327–341 (EPEPALQPTVEPPSG) the composition is skewed to pro residues.

The protein localises to the membrane. This chain is V-set and immunoglobulin domain-containing protein 1 (VSIG1), found in Bos taurus (Bovine).